The following is a 403-amino-acid chain: Imidazolonepropionase (403 aa).

Residues His-68 and His-70 each coordinate Fe(3+). Residues His-68 and His-70 each coordinate Zn(2+). 4-imidazolone-5-propanoate-binding residues include Arg-77, Tyr-140, and His-173. Tyr-140 provides a ligand contact to N-formimidoyl-L-glutamate. His-238 is a Fe(3+) binding site. Residue His-238 coordinates Zn(2+). Gln-241 lines the 4-imidazolone-5-propanoate pocket. Asp-313 provides a ligand contact to Fe(3+). Asp-313 serves as a coordination point for Zn(2+). Residues Asn-315 and Gly-317 each coordinate N-formimidoyl-L-glutamate. Ser-318 is a binding site for 4-imidazolone-5-propanoate.

This sequence belongs to the metallo-dependent hydrolases superfamily. HutI family. Zn(2+) is required as a cofactor. It depends on Fe(3+) as a cofactor.

The protein resides in the cytoplasm. It catalyses the reaction 4-imidazolone-5-propanoate + H2O = N-formimidoyl-L-glutamate. It participates in amino-acid degradation; L-histidine degradation into L-glutamate; N-formimidoyl-L-glutamate from L-histidine: step 3/3. Catalyzes the hydrolytic cleavage of the carbon-nitrogen bond in imidazolone-5-propanoate to yield N-formimidoyl-L-glutamate. It is the third step in the universal histidine degradation pathway. This Hahella chejuensis (strain KCTC 2396) protein is Imidazolonepropionase.